Here is a 704-residue protein sequence, read N- to C-terminus: Histone-lysine N-methyltransferase, H3 lysine-9 specific SUVH1 (704 aa).

2 disordered regions span residues 1–21 (MEQG…TRVL) and 68–176 (PFVA…QAEG). Composition is skewed to polar residues over residues 80–90 (ESSQQTPSGVP) and 109–121 (SFRT…GNSG). Residues 159–170 (GKKRGRPKKPRR) show a composition bias toward basic residues. In terms of domain architecture, YDG spans 265–412 (GNAPGIEVGD…CNVFKYKLLR (148 aa)). Positions 487-548 (PSCHCVGGCQ…NCRNRMSQGG (62 aa)) constitute a Pre-SET domain. Zn(2+) is bound by residues Cys-489, Cys-491, Cys-495, Cys-502, Cys-504, Cys-530, Cys-534, Cys-536, and Cys-540. The 131-residue stretch at 551–681 (ARLEVFKTKN…PMQELTFDYG (131 aa)) folds into the SET domain. Residues 561–563 (RGW), Asp-593, Tyr-595, Arg-635, and 638–639 (NH) each bind S-adenosyl-L-methionine. The Zn(2+) site is built by Cys-641, Cys-692, Cys-694, and Cys-699. The 17-residue stretch at 688–704 (RRKKCLCGSLNCRGYFY) folds into the Post-SET domain.

It belongs to the class V-like SAM-binding methyltransferase superfamily. Histone-lysine methyltransferase family. Suvar3-9 subfamily. In terms of assembly, interacts with LHP1. As to expression, expressed in roots, stems, leaves and flowers.

It is found in the nucleus. The protein resides in the chromosome. The enzyme catalyses N(6)-methyl-L-lysyl(27)-[histone H3] + S-adenosyl-L-methionine = N(6),N(6)-dimethyl-L-lysyl(27)-[histone H3] + S-adenosyl-L-homocysteine + H(+). It carries out the reaction L-lysyl(9)-[histone H3] + 2 S-adenosyl-L-methionine = N(6),N(6)-dimethyl-L-lysyl(9)-[histone H3] + 2 S-adenosyl-L-homocysteine + 2 H(+). It catalyses the reaction L-lysyl(27)-[histone H3] + S-adenosyl-L-methionine = N(6)-methyl-L-lysyl(27)-[histone H3] + S-adenosyl-L-homocysteine + H(+). Histone methyltransferase. Methylates in vitro both 'Lys-9' and 'Lys-27' of histone H3. Required for in vivo dimethylation of 'Lys-9'. H3 'Lys-9' methylation represents a specific tag for epigenetic control for plant development and transcriptional repression. The protein is Histone-lysine N-methyltransferase, H3 lysine-9 specific SUVH1 (SUVH1) of Nicotiana tabacum (Common tobacco).